Reading from the N-terminus, the 61-residue chain is Small ribosomal subunit protein uS14 (61 aa).

Residues C24, C27, C40, and C43 each coordinate Zn(2+).

Belongs to the universal ribosomal protein uS14 family. Zinc-binding uS14 subfamily. As to quaternary structure, part of the 30S ribosomal subunit. Contacts proteins S3 and S10. Zn(2+) is required as a cofactor.

Its function is as follows. Binds 16S rRNA, required for the assembly of 30S particles and may also be responsible for determining the conformation of the 16S rRNA at the A site. The chain is Small ribosomal subunit protein uS14 from Oleidesulfovibrio alaskensis (strain ATCC BAA-1058 / DSM 17464 / G20) (Desulfovibrio alaskensis).